We begin with the raw amino-acid sequence, 168 residues long: uncharacterized protein (168 aa).

The helical transmembrane segment at 5–24 (IAWASACLLLVMLTGFFTIG) threads the bilayer.

Its subcellular location is the membrane. This is an uncharacterized protein from Bacillus subtilis (strain 168).